A 179-amino-acid polypeptide reads, in one-letter code: Replication restart protein DnaT (179 aa).

The segment at Ser151 to Gly179 is disordered. Positions Pro159 to Ile173 are enriched in basic and acidic residues.

The protein belongs to the DnaT family. In terms of assembly, homooligomerizes. Interacts with PriB. Component of the replication restart primosome. Primosome assembly occurs via a 'hand-off' mechanism. PriA binds to replication forks, subsequently PriB then DnaT bind; DnaT then displaces ssDNA to generate the helicase loading substrate.

Functionally, involved in the restart of stalled replication forks, which reloads the replicative helicase on sites other than the origin of replication. Can function in multiple replication restart pathways. Displaces ssDNA from a PriB-ssDNA complex. Probably forms a spiral filament on ssDNA. This chain is Replication restart protein DnaT, found in Klebsiella pneumoniae (strain 342).